Here is a 292-residue protein sequence, read N- to C-terminus: Insulin-like growth factor-binding protein 3 (292 aa).

Positions 1–27 are cleaved as a signal peptide; it reads MHPARPALWAAALTALTLLRGPPVARA. Residues 36–119 form the IGFBP N-terminal domain; the sequence is PVVRCEPCDA…LNGRGFCANA (84 aa). 6 disulfide bridges follow: cysteine 40/cysteine 69, cysteine 43/cysteine 71, cysteine 51/cysteine 72, cysteine 60/cysteine 75, cysteine 83/cysteine 96, and cysteine 90/cysteine 116. N-linked (GlcNAc...) asparagine glycosylation is found at asparagine 118 and asparagine 137. 2 disordered regions span residues 128-152 and 178-212; these read YLPS…SVES and KGHA…TEYG. Serine 149 carries the post-translational modification Phosphoserine. The span at 178-191 shows a compositional bias: basic and acidic residues; that stretch reads KGHARDSQRYKVDY. The segment covering 192–203 has biased composition (polar residues); sequence ESQSTDTQNFSS. N-linked (GlcNAc...) asparagine glycosylation occurs at asparagine 200. Serine 202 is subject to Phosphoserine. One can recognise a Thyroglobulin type-1 domain in the interval 211–286; sequence YGPCRREMED…DTKGKDDVHC (76 aa). Intrachain disulfides connect cysteine 214–cysteine 241, cysteine 252–cysteine 263, and cysteine 265–cysteine 286.

In terms of assembly, interacts with XLKD1. Binds IGF2 more than IGF1. Forms a ternary complex of about 140 to 150 kDa with IGF1 or IGF2 and a 85 kDa glycoprotein (ALS). Interacts with TMEM219. Phosphorylated by FAM20C in the extracellular medium.

The protein localises to the secreted. Its function is as follows. IGF-binding proteins prolong the half-life of the IGFs and have been shown to either inhibit or stimulate the growth promoting effects of the IGFs on cell culture. They alter the interaction of IGFs with their cell surface receptors. Also exhibits IGF-independent antiproliferative and apoptotic effects mediated by its receptor TMEM219/IGFBP-3R. Promotes testicular germ cell apoptosis. This chain is Insulin-like growth factor-binding protein 3 (Igfbp3), found in Mus musculus (Mouse).